Here is a 435-residue protein sequence, read N- to C-terminus: E3 ubiquitin-protein ligase itt1 (435 aa).

The RWD domain maps to 16-135; the sequence is DELIALQSIY…EHVRSIATIA (120 aa). The TRIAD supradomain stretch occupies residues 170–420; that stretch reads RKFQCNVCFD…DPVSSCYGML (251 aa). Residues Cys174, Cys177, Cys192, His194, Cys197, Cys200, Cys219, Cys224, Cys266, Cys271, Cys286, Cys289, Cys294, Cys297, His302, Cys308, Cys368, and Cys371 each coordinate Zn(2+). The segment at 174–224 adopts an RING-type 1 zinc-finger fold; sequence CNVCFDEFNGTDCFQLTRCGHVSCQSCLRDYYTMCIQEGMFSQIKCIDLDC. The IBR-type zinc finger occupies 245-308; that stretch reads TNRYKELEEK…ATWHGDLSPC (64 aa). Residues 368-396 form an RING-type 2; atypical zinc finger; the sequence is CPTCDRVVERIDGCCHMNCLCGTHFCFLC. The active site involves Cys381. 6 residues coordinate Zn(2+): Cys386, Cys388, Cys393, Cys396, His408, and Cys416.

Belongs to the RBR family. RNF14 subfamily.

The protein resides in the cytoplasm. It localises to the nucleus. It carries out the reaction [E2 ubiquitin-conjugating enzyme]-S-ubiquitinyl-L-cysteine + [acceptor protein]-L-lysine = [E2 ubiquitin-conjugating enzyme]-L-cysteine + [acceptor protein]-N(6)-ubiquitinyl-L-lysine.. The protein operates within protein modification; protein ubiquitination. Its function is as follows. E3 ubiquitin-protein ligase involved in the rescue of stalled ribosomes by promoting ubiquitination and degradation of proteins on stalled ribosomes. Specifically required to resolve RNA-protein cross-links caused by reactive aldehydes, which trigger translation stress by stalling ribosomes: acts by catalying 'Lys-6'-linked ubiquitination of RNA-protein cross-links, leading to their degradation. The chain is E3 ubiquitin-protein ligase itt1 (itt1) from Schizosaccharomyces pombe (strain 972 / ATCC 24843) (Fission yeast).